The primary structure comprises 347 residues: tRNA N6-adenosine threonylcarbamoyltransferase (347 aa).

His-111 and His-115 together coordinate Fe cation. Substrate-binding positions include 134–138 (LISGG), Asp-167, Gly-180, and Asn-277. A Fe cation-binding site is contributed by Asp-305.

The protein belongs to the KAE1 / TsaD family. The cofactor is Fe(2+).

The protein localises to the cytoplasm. It carries out the reaction L-threonylcarbamoyladenylate + adenosine(37) in tRNA = N(6)-L-threonylcarbamoyladenosine(37) in tRNA + AMP + H(+). In terms of biological role, required for the formation of a threonylcarbamoyl group on adenosine at position 37 (t(6)A37) in tRNAs that read codons beginning with adenine. Is involved in the transfer of the threonylcarbamoyl moiety of threonylcarbamoyl-AMP (TC-AMP) to the N6 group of A37, together with TsaE and TsaB. TsaD likely plays a direct catalytic role in this reaction. The chain is tRNA N6-adenosine threonylcarbamoyltransferase from Actinobacillus pleuropneumoniae serotype 5b (strain L20).